Here is a 206-residue protein sequence, read N- to C-terminus: uncharacterized protein (206 aa).

Residues 128–206 are disordered; that stretch reads KRYNVQKPKV…DQSWLDELLR (79 aa). Residues 171 to 181 are compositionally biased toward polar residues; it reads YISSNHSSMHI.

Its subcellular location is the cytoplasm. The protein localises to the nucleus. This is an uncharacterized protein from Schizosaccharomyces pombe (strain 972 / ATCC 24843) (Fission yeast).